We begin with the raw amino-acid sequence, 794 residues long: Phosphoribosylformylglycinamidine synthase subunit PurL (794 aa).

Residue H47 is part of the active site. Positions 50 and 89 each coordinate ATP. E91 serves as a coordination point for Mg(2+). Substrate is bound by residues S92–H95 and R114. H93 functions as the Proton acceptor in the catalytic mechanism. D115 is a Mg(2+) binding site. A substrate-binding site is contributed by Q238. Residue D266 participates in Mg(2+) binding. Residue E310 to Q312 participates in substrate binding. Positions 522 and 559 each coordinate ATP. A Mg(2+)-binding site is contributed by N560. S562 lines the substrate pocket.

This sequence belongs to the FGAMS family. In terms of assembly, monomer. Part of the FGAM synthase complex composed of 1 PurL, 1 PurQ and 2 PurS subunits.

Its subcellular location is the cytoplasm. It carries out the reaction N(2)-formyl-N(1)-(5-phospho-beta-D-ribosyl)glycinamide + L-glutamine + ATP + H2O = 2-formamido-N(1)-(5-O-phospho-beta-D-ribosyl)acetamidine + L-glutamate + ADP + phosphate + H(+). Its pathway is purine metabolism; IMP biosynthesis via de novo pathway; 5-amino-1-(5-phospho-D-ribosyl)imidazole from N(2)-formyl-N(1)-(5-phospho-D-ribosyl)glycinamide: step 1/2. In terms of biological role, part of the phosphoribosylformylglycinamidine synthase complex involved in the purines biosynthetic pathway. Catalyzes the ATP-dependent conversion of formylglycinamide ribonucleotide (FGAR) and glutamine to yield formylglycinamidine ribonucleotide (FGAM) and glutamate. The FGAM synthase complex is composed of three subunits. PurQ produces an ammonia molecule by converting glutamine to glutamate. PurL transfers the ammonia molecule to FGAR to form FGAM in an ATP-dependent manner. PurS interacts with PurQ and PurL and is thought to assist in the transfer of the ammonia molecule from PurQ to PurL. The chain is Phosphoribosylformylglycinamidine synthase subunit PurL from Prochlorococcus marinus (strain MIT 9303).